A 724-amino-acid polypeptide reads, in one-letter code: Membrane protein YdfJ (724 aa).

Transmembrane regions (helical) follow at residues 17-37 (IKAI…AVTL), 179-199 (IVGI…LLIA), 200-220 (GLPI…VLIG), 231-251 (LSLA…FIFT), 277-297 (AVVF…VVNI), 309-329 (LSVL…LSIA), 360-380 (IMLS…SMHL), 512-532 (AIPV…TIVF), 539-559 (LVAV…CVFV), 575-595 (GPIL…LAMD), 627-647 (PVVT…IFAG), and 655-675 (GLAL…TLIP).

Belongs to the resistance-nodulation-cell division (RND) (TC 2.A.6) family. MmpL subfamily.

Its subcellular location is the cell membrane. The sequence is that of Membrane protein YdfJ (ydfJ) from Bacillus subtilis (strain 168).